Here is a 276-residue protein sequence, read N- to C-terminus: Syntaxin-12 (276 aa).

Ser2 carries the N-acetylserine modification. Residues 2 to 248 (SYGPLDMYRN…RAAYYQKKSR (247 aa)) are Cytoplasmic-facing. Residues 33-131 (IQRISQATAQ…RRVSEKEKES (99 aa)) adopt a coiled-coil conformation. 4 positions are modified to phosphoserine: Ser139, Ser142, Ser218, and Ser225. A t-SNARE coiled-coil homology domain is found at 178-240 (LELIKERETA…ERATEQLQRA (63 aa)). Residues 249–269 (KKMCILVLVLSVIIVILGLII) form a helical; Anchor for type IV membrane protein membrane-spanning segment. Residues 270–276 (WLVYKTK) lie on the Vesicular side of the membrane.

It belongs to the syntaxin family. Associates with the BLOC-1 complex. Interacts with BLOC1S6. Interacts with NAPA and SNAP23. Identified in a complex containing STX6, STX12, VAMP4 and VTI1A. Interacts with GRIPAP1. Forms a complex with GRIP1, GRIA2 and NSG1; controls the intracellular fate of AMPAR and the endosomal sorting of the GRIA2 subunit toward recycling and membrane targeting. Interacts with NSG1. Interacts with TPC1. Interacts (via N-terminus) with VPS13B.

It is found in the endosome membrane. Its subcellular location is the golgi apparatus membrane. The protein localises to the endomembrane system. It localises to the early endosome membrane. The protein resides in the recycling endosome membrane. Functionally, SNARE promoting fusion of transport vesicles with target membranes. Together with SNARE STX6, promotes movement of vesicles from endosomes to the cell membrane, and may therefore function in the endocytic recycling pathway. Through complex formation with GRIP1, GRIA2 and NSG1 controls the intracellular fate of AMPAR and the endosomal sorting of the GRIA2 subunit toward recycling and membrane targeting. This chain is Syntaxin-12 (STX12), found in Pongo abelii (Sumatran orangutan).